The sequence spans 338 residues: MVSMTASSGRRVLLAAPRGYCAGVDRAVIAVEKALEQYGAPIYVRHEIVHNKYVVQTLERKGAIFVERTAEVPEGAIVMFSAHGVAPVVHEEAARGKLATIDATCPLVTKVHKEAVRFANEDFDILLIGHEGHEEVIGTSGEAPEHITLVDGPGDVAKVEVRDPSKVVWLSQTTLSVDETMETVDALKEKFPQLISPPSDDICYATQNRQLAVKQMGEEADLVIVVGSRNSSNSVRLVEVAKLAGARDAYLVDFADEIDEAWLEGVSTVGVTSGASVPEILVEQVLEWLSQRGFEDVEIVKAAEESITFSLPKELRRDLRAEAAALVEQRTGNGPSAE.

Cys-21 is a binding site for [4Fe-4S] cluster. Residues His-50 and His-83 each contribute to the (2E)-4-hydroxy-3-methylbut-2-enyl diphosphate site. Dimethylallyl diphosphate contacts are provided by His-50 and His-83. 2 residues coordinate isopentenyl diphosphate: His-50 and His-83. [4Fe-4S] cluster is bound at residue Cys-105. His-133 is a (2E)-4-hydroxy-3-methylbut-2-enyl diphosphate binding site. His-133 lines the dimethylallyl diphosphate pocket. His-133 provides a ligand contact to isopentenyl diphosphate. Residue Glu-135 is the Proton donor of the active site. (2E)-4-hydroxy-3-methylbut-2-enyl diphosphate is bound at residue Thr-173. Residue Cys-203 participates in [4Fe-4S] cluster binding. Residues Ser-231, Ser-232, Asn-233, and Ser-276 each contribute to the (2E)-4-hydroxy-3-methylbut-2-enyl diphosphate site. Positions 231, 232, 233, and 276 each coordinate dimethylallyl diphosphate. Positions 231, 232, 233, and 276 each coordinate isopentenyl diphosphate.

It belongs to the IspH family. Requires [4Fe-4S] cluster as cofactor.

The enzyme catalyses isopentenyl diphosphate + 2 oxidized [2Fe-2S]-[ferredoxin] + H2O = (2E)-4-hydroxy-3-methylbut-2-enyl diphosphate + 2 reduced [2Fe-2S]-[ferredoxin] + 2 H(+). The catalysed reaction is dimethylallyl diphosphate + 2 oxidized [2Fe-2S]-[ferredoxin] + H2O = (2E)-4-hydroxy-3-methylbut-2-enyl diphosphate + 2 reduced [2Fe-2S]-[ferredoxin] + 2 H(+). The protein operates within isoprenoid biosynthesis; dimethylallyl diphosphate biosynthesis; dimethylallyl diphosphate from (2E)-4-hydroxy-3-methylbutenyl diphosphate: step 1/1. It functions in the pathway isoprenoid biosynthesis; isopentenyl diphosphate biosynthesis via DXP pathway; isopentenyl diphosphate from 1-deoxy-D-xylulose 5-phosphate: step 6/6. Its function is as follows. Catalyzes the conversion of 1-hydroxy-2-methyl-2-(E)-butenyl 4-diphosphate (HMBPP) into a mixture of isopentenyl diphosphate (IPP) and dimethylallyl diphosphate (DMAPP). Acts in the terminal step of the DOXP/MEP pathway for isoprenoid precursor biosynthesis. The protein is 4-hydroxy-3-methylbut-2-enyl diphosphate reductase of Streptomyces avermitilis (strain ATCC 31267 / DSM 46492 / JCM 5070 / NBRC 14893 / NCIMB 12804 / NRRL 8165 / MA-4680).